The primary structure comprises 281 residues: NADPH-dependent 7-cyano-7-deazaguanine reductase (281 aa).

Position 88-90 (88-90) interacts with substrate; sequence IES. 90–91 lines the NADPH pocket; the sequence is SK. The active-site Thioimide intermediate is the cysteine 189. The Proton donor role is filled by aspartate 196. 228 to 229 is a substrate binding site; that stretch reads HE. 257–258 contributes to the NADPH binding site; that stretch reads RG.

It belongs to the GTP cyclohydrolase I family. QueF type 2 subfamily. In terms of assembly, homodimer.

It is found in the cytoplasm. The enzyme catalyses 7-aminomethyl-7-carbaguanine + 2 NADP(+) = 7-cyano-7-deazaguanine + 2 NADPH + 3 H(+). The protein operates within tRNA modification; tRNA-queuosine biosynthesis. Functionally, catalyzes the NADPH-dependent reduction of 7-cyano-7-deazaguanine (preQ0) to 7-aminomethyl-7-deazaguanine (preQ1). The sequence is that of NADPH-dependent 7-cyano-7-deazaguanine reductase from Yersinia enterocolitica serotype O:8 / biotype 1B (strain NCTC 13174 / 8081).